The primary structure comprises 37 residues: Large ribosomal subunit protein bL36A (37 aa).

It belongs to the bacterial ribosomal protein bL36 family.

This chain is Large ribosomal subunit protein bL36A, found in Neisseria meningitidis serogroup C (strain 053442).